A 62-amino-acid chain; its full sequence is Potassium channel toxin alpha-KTx Tx790 (62 aa).

The N-terminal stretch at 1-18 (MQKLFIVLVLFCILRLDA) is a signal peptide. Intrachain disulfides connect C28-C46, C33-C59, and C37-C61.

It belongs to the short scorpion toxin superfamily. Potassium channel inhibitor family. Alpha-KTx 23 subfamily. As to expression, expressed by the venom gland.

Its subcellular location is the secreted. Its function is as follows. May block potassium channels. In Buthus israelis (Israeli scorpion), this protein is Potassium channel toxin alpha-KTx Tx790.